The following is a 335-amino-acid chain: D-alanine--D-alanine ligase (335 aa).

Positions 124–330 (KMWFSALGVP…FTEYLSDVIS (207 aa)) constitute an ATP-grasp domain. 154–209 (AFDTWGSVFIKAASQGSSVGCYKVDVRDNIAKVLEEAFGYAPYVVVEKTIKARELE) is a binding site for ATP. 3 residues coordinate Mg(2+): aspartate 284, glutamate 297, and asparagine 299.

It belongs to the D-alanine--D-alanine ligase family. Mg(2+) is required as a cofactor. Requires Mn(2+) as cofactor.

The protein resides in the cytoplasm. The catalysed reaction is 2 D-alanine + ATP = D-alanyl-D-alanine + ADP + phosphate + H(+). The protein operates within cell wall biogenesis; peptidoglycan biosynthesis. Functionally, cell wall formation. The polypeptide is D-alanine--D-alanine ligase (Shewanella denitrificans (strain OS217 / ATCC BAA-1090 / DSM 15013)).